The following is a 157-amino-acid chain: Acetyltransferase PseH (157 aa).

Positions 5-152 (KNFTELNSQE…YHICLKQSDC (148 aa)) constitute an N-acetyltransferase domain.

In terms of biological role, catalyzes the third step in the biosynthesis of pseudaminic acid, a sialic-acid-like sugar that is used to modify flagellin. Mediates N-4 acetylation of UDP-4-amino-4,6-dideoxy-beta-L-AltNAc to form UDP-2,4-diacetamido-2,4,6-trideoxy-beta-L-altropyranose. This chain is Acetyltransferase PseH (pseH), found in Campylobacter jejuni subsp. jejuni serotype O:23/36 (strain 81-176).